The primary structure comprises 224 residues: 4'-phosphopantetheinyl transferase (224 aa).

Positions 107, 109, and 151 each coordinate Mg(2+). Residues 158–189 form a peptidyl carrier protein binding region; that stretch reads GKGLSLPLDSFSVRLKDDGHVSIELPDGHEPC.

The protein belongs to the P-Pant transferase superfamily. Gsp/Sfp/HetI/AcpT family. The cofactor is Mg(2+).

It catalyses the reaction apo-[peptidyl-carrier protein] + CoA = holo-[peptidyl-carrier protein] + adenosine 3',5'-bisphosphate + H(+). In terms of biological role, may activate the peptidyl carrier protein (PCP) domains of surfactin synthetase SRF1/2/3 and iturin A synthetase, by transferring the 4'-phosphopantetheinyl moiety of coenzyme A (CoA) to a serine residue. Required for the coproduction of the lipopeptide antibiotics, iturin A and surfactin. The polypeptide is 4'-phosphopantetheinyl transferase (lpa-14) (Bacillus subtilis).